The following is a 290-amino-acid chain: MYG1 protein CPn_0489/CP_0265/CPj0489/CpB0509 (290 aa).

Belongs to the MYG1 family.

This Chlamydia pneumoniae (Chlamydophila pneumoniae) protein is MYG1 protein CPn_0489/CP_0265/CPj0489/CpB0509.